A 213-amino-acid chain; its full sequence is LexA repressor (213 aa).

Residues 27 to 47 (QTEIARAFGFKGIRAAQYHLE) constitute a DNA-binding region (H-T-H motif). Active-site for autocatalytic cleavage activity residues include Ser-133 and Lys-170.

It belongs to the peptidase S24 family. As to quaternary structure, homodimer.

It carries out the reaction Hydrolysis of Ala-|-Gly bond in repressor LexA.. Functionally, represses a number of genes involved in the response to DNA damage (SOS response), including recA and lexA. Has been shown to bind to the palindromic sequence 5'-CTG-N(8-12)-C-[TC]-G. In the presence of single-stranded DNA, RecA interacts with LexA causing an autocatalytic cleavage which disrupts the DNA-binding part of LexA, leading to derepression of the SOS regulon and eventually DNA repair. The sequence is that of LexA repressor from Xanthomonas citri (Xanthomonas campestris pv. citri).